We begin with the raw amino-acid sequence, 363 residues long: Cobalt-precorrin-5B C(1)-methyltransferase (363 aa).

This sequence belongs to the CbiD family.

It catalyses the reaction Co-precorrin-5B + S-adenosyl-L-methionine = Co-precorrin-6A + S-adenosyl-L-homocysteine. It functions in the pathway cofactor biosynthesis; adenosylcobalamin biosynthesis; cob(II)yrinate a,c-diamide from sirohydrochlorin (anaerobic route): step 6/10. Catalyzes the methylation of C-1 in cobalt-precorrin-5B to form cobalt-precorrin-6A. This Burkholderia pseudomallei (strain K96243) protein is Cobalt-precorrin-5B C(1)-methyltransferase.